The following is a 593-amino-acid chain: 2-succinyl-5-enolpyruvyl-6-hydroxy-3-cyclohexene-1-carboxylate synthase (593 aa).

Belongs to the TPP enzyme family. MenD subfamily. In terms of assembly, homodimer. Requires Mg(2+) as cofactor. Mn(2+) is required as a cofactor. The cofactor is thiamine diphosphate.

The catalysed reaction is isochorismate + 2-oxoglutarate + H(+) = 5-enolpyruvoyl-6-hydroxy-2-succinyl-cyclohex-3-ene-1-carboxylate + CO2. It functions in the pathway quinol/quinone metabolism; 1,4-dihydroxy-2-naphthoate biosynthesis; 1,4-dihydroxy-2-naphthoate from chorismate: step 2/7. Its pathway is quinol/quinone metabolism; menaquinone biosynthesis. Catalyzes the thiamine diphosphate-dependent decarboxylation of 2-oxoglutarate and the subsequent addition of the resulting succinic semialdehyde-thiamine pyrophosphate anion to isochorismate to yield 2-succinyl-5-enolpyruvyl-6-hydroxy-3-cyclohexene-1-carboxylate (SEPHCHC). The sequence is that of 2-succinyl-5-enolpyruvyl-6-hydroxy-3-cyclohexene-1-carboxylate synthase from Pelodictyon phaeoclathratiforme (strain DSM 5477 / BU-1).